The chain runs to 138 residues: DNA-directed RNA polymerase subunit omega (138 aa).

Positions 104-138 are disordered; it reads GNSDGLENSSNSRDDNPLGRDNFFSTPENRNNTNS. Over residues 126–138 the composition is skewed to polar residues; sequence FFSTPENRNNTNS.

It belongs to the RNA polymerase subunit omega family. The RNAP catalytic core consists of 2 alpha, 1 beta, 1 beta' and 1 omega subunit. When a sigma factor is associated with the core the holoenzyme is formed, which can initiate transcription.

It carries out the reaction RNA(n) + a ribonucleoside 5'-triphosphate = RNA(n+1) + diphosphate. Promotes RNA polymerase assembly. Latches the N- and C-terminal regions of the beta' subunit thereby facilitating its interaction with the beta and alpha subunits. The chain is DNA-directed RNA polymerase subunit omega from Ehrlichia chaffeensis (strain ATCC CRL-10679 / Arkansas).